The following is a 122-amino-acid chain: Large ribosomal subunit protein uL14c (122 aa).

Belongs to the universal ribosomal protein uL14 family. Part of the 50S ribosomal subunit.

The protein localises to the plastid. The protein resides in the chloroplast. In terms of biological role, binds to 23S rRNA. The polypeptide is Large ribosomal subunit protein uL14c (Tupiella akineta (Green alga)).